The following is a 228-amino-acid chain: Cytochrome c oxidase subunit 2 (228 aa).

Residues 1 to 26 are Mitochondrial intermembrane-facing; it reads MSTWANLGLQDSASPLMEQLIFFHDH. The helical transmembrane segment at 27-48 threads the bilayer; that stretch reads ALLILVMITVLVGYLMFMLFFN. At 49 to 62 the chain is on the mitochondrial matrix side; sequence NYVNRFLLHGQLIE. A helical transmembrane segment spans residues 63 to 82; that stretch reads MIWTILPAIILLFIALPSLR. The Mitochondrial intermembrane portion of the chain corresponds to 83 to 228; it reads LLYLLDEINE…FIKWISSNNS (146 aa). Cu cation-binding residues include His-161, Cys-196, Glu-198, Cys-200, His-204, and Met-207. Mg(2+) is bound at residue Glu-198.

Belongs to the cytochrome c oxidase subunit 2 family. As to quaternary structure, component of the cytochrome c oxidase (complex IV, CIV), a multisubunit enzyme composed of a catalytic core of 3 subunits and several supernumerary subunits. The complex exists as a monomer or a dimer and forms supercomplexes (SCs) in the inner mitochondrial membrane with ubiquinol-cytochrome c oxidoreductase (cytochrome b-c1 complex, complex III, CIII). Cu cation serves as cofactor.

It is found in the mitochondrion inner membrane. The catalysed reaction is 4 Fe(II)-[cytochrome c] + O2 + 8 H(+)(in) = 4 Fe(III)-[cytochrome c] + 2 H2O + 4 H(+)(out). Component of the cytochrome c oxidase, the last enzyme in the mitochondrial electron transport chain which drives oxidative phosphorylation. The respiratory chain contains 3 multisubunit complexes succinate dehydrogenase (complex II, CII), ubiquinol-cytochrome c oxidoreductase (cytochrome b-c1 complex, complex III, CIII) and cytochrome c oxidase (complex IV, CIV), that cooperate to transfer electrons derived from NADH and succinate to molecular oxygen, creating an electrochemical gradient over the inner membrane that drives transmembrane transport and the ATP synthase. Cytochrome c oxidase is the component of the respiratory chain that catalyzes the reduction of oxygen to water. Electrons originating from reduced cytochrome c in the intermembrane space (IMS) are transferred via the dinuclear copper A center (CU(A)) of subunit 2 and heme A of subunit 1 to the active site in subunit 1, a binuclear center (BNC) formed by heme A3 and copper B (CU(B)). The BNC reduces molecular oxygen to 2 water molecules using 4 electrons from cytochrome c in the IMS and 4 protons from the mitochondrial matrix. The protein is Cytochrome c oxidase subunit 2 (mt:CoII) of Drosophila yakuba (Fruit fly).